Consider the following 173-residue polypeptide: Mesencephalic astrocyte-derived neurotrophic factor homolog (173 aa).

A signal peptide spans 1 to 22 (MKTWHMVVVIGFLATLAQTSLA). 4 cysteine pairs are disulfide-bonded: C28–C114, C31–C103, C61–C72, and C148–C151.

The protein belongs to the ARMET family.

It is found in the secreted. In terms of biological role, required during the maturation of the embryonic nervous system for maintenance of neuronal and cuticular connectivity. Essential for maintenance of dopaminergic neurons and dopamine levels. The sequence is that of Mesencephalic astrocyte-derived neurotrophic factor homolog from Drosophila simulans (Fruit fly).